The following is a 522-amino-acid chain: Neuropeptide FF receptor 2 (522 aa).

Residues 1–147 (MNSFFGTPAA…NYYLHQPQVA (147 aa)) are Extracellular-facing. The tract at residues 25 to 49 (KEAGRERRALSVQQRGGPAWSGSLE) is disordered. N-linked (GlcNAc...) asparagine glycosylation is found at N110, N122, and N133. The helical transmembrane segment at 148–168 (AIFIISYFLIFFLCMMGNTVV) threads the bilayer. At 169-184 (CFIVMRNKHMHTVTNL) the chain is on the cytoplasmic side. The chain crosses the membrane as a helical span at residues 185–205 (FILNLAISDLLVGIFCMPITL). At 206-221 (LDNIIAGWPFGNTMCK) the chain is on the extracellular side. An intrachain disulfide couples C220 to C308. Residues 222 to 242 (ISGLVQGISVAASVFTLVAIA) form a helical membrane-spanning segment. The Cytoplasmic portion of the chain corresponds to 243 to 262 (VDRFQCVVYPFKPKLTIKTA). A helical membrane pass occupies residues 263-283 (FVIIMIIWVLAITIMSPSAVM). Over 284 to 319 (LHVQEEKYYRVRLNSQNKTSPVYWCREDWPNQEMRK) the chain is Extracellular. A glycan (N-linked (GlcNAc...) asparagine) is linked at N300. The helical transmembrane segment at 320–340 (IYTTVLFANIYLAPLSLIVIM) threads the bilayer. Topologically, residues 341–377 (YGRIGISLFRAAVPHTGRKNQEQWHVVSRKKQKIIKM) are cytoplasmic. The chain crosses the membrane as a helical span at residues 378–398 (LLIVALLFILSWLPLWTLMML). Over 399–413 (SDYADLSPNELQIIN) the chain is Extracellular. A helical membrane pass occupies residues 414-434 (IYIYPFAHWLAFGNSSVNPII). At 435–522 (YGFFNENFRR…LKETTNSSEI (88 aa)) the chain is on the cytoplasmic side.

The protein belongs to the G-protein coupled receptor 1 family. As to expression, isoform 1 is abundant in placenta. Relatively highly expressed in thymus, testis, and small intestine. Expressed at low levels in several tissues including spleen, prostate, brain, heart, ovary, colon, kidney, lung, liver and pancreas and not expressed in skeletal muscle and leukocytes. Isoform 2 expression is highest in placenta (but at relatively low level compared to isoform 1). Very low level of expression in numerous tissues including adipose tissue and many brain regions. Isoform 3 is expressed in brain and heart and, at lower levels, in kidney, liver, lung and pancreas.

It localises to the cell membrane. Receptor for NPAF (A-18-F-amide) and NPFF (F-8-F-amide) neuropeptides, also known as morphine-modulating peptides. Can also be activated by a variety of naturally occurring or synthetic FMRF-amide like ligands. This receptor mediates its action by association with G proteins that activate a phosphatidylinositol-calcium second messenger system. This is Neuropeptide FF receptor 2 from Homo sapiens (Human).